The following is a 424-amino-acid chain: Glycerol-3-phosphate dehydrogenase [NAD(+)] (424 aa).

NAD(+)-binding positions include 79–84 (GSGNWG), Phe-111, and Phe-167. Residue Lys-190 coordinates substrate. An NAD(+)-binding site is contributed by Ala-223. Residue Lys-283 is the Proton acceptor of the active site. NAD(+)-binding residues include Arg-348 and Gln-377. Position 348 to 349 (348 to 349 (RN)) interacts with substrate.

This sequence belongs to the NAD-dependent glycerol-3-phosphate dehydrogenase family.

It catalyses the reaction sn-glycerol 3-phosphate + NAD(+) = dihydroxyacetone phosphate + NADH + H(+). This chain is Glycerol-3-phosphate dehydrogenase [NAD(+)] (GPD), found in Eremothecium gossypii (strain ATCC 10895 / CBS 109.51 / FGSC 9923 / NRRL Y-1056) (Yeast).